The following is an 819-amino-acid chain: Kinesin-like protein KIN-13A (819 aa).

The tract at residues 150 to 178 is disordered; sequence EPFEPSPFIPKEMDEDDDDMLPGSQPGPS. Residues 199–535 form the Kinesin motor domain; that stretch reads KIKVVVRKRP…LRYADRVKSL (337 aa). 289 to 296 lines the ATP pocket; that stretch reads GQTGSGKT. The disordered stretch occupies residues 534 to 729; the sequence is SLSKGSNTRK…QSEKESSCDD (196 aa). Over residues 550-562 the composition is skewed to low complexity; that stretch reads TIPSSKDSSSAPS. Basic and acidic residues-rich tracts occupy residues 577–589 and 614–631; these read QEKR…RKAA and RGKE…ERVD. The segment covering 632–652 has biased composition (polar residues); the sequence is LNSSRISYNSKPQSVQSSANL. The segment covering 669-686 has biased composition (basic and acidic residues); sequence YRDDKPERQSNYAKKDSG. The segment covering 697–719 has biased composition (low complexity); it reads QQAKQLQQQQRPTSASASQNSSR. Residues 736 to 767 are a coiled coil; the sequence is LEEEEALIAAHRKEIENTMEIVREEMNLLAEV.

It belongs to the TRAFAC class myosin-kinesin ATPase superfamily. Kinesin family. KIN-13 subfamily. In terms of tissue distribution, ubiquitous.

Its subcellular location is the microsome. This is Kinesin-like protein KIN-13A from Oryza sativa subsp. japonica (Rice).